Here is a 607-residue protein sequence, read N- to C-terminus: Condensin-2 complex subunit H2 (607 aa).

A Phosphothreonine modification is found at Thr-19. A phosphoserine mark is found at Ser-95, Ser-231, Ser-235, and Ser-252. 2 disordered regions span residues 211-312 and 325-347; these read YPMS…WQSL and KGKP…KRKG. A compositionally biased stretch (acidic residues) spans 254–263; that stretch reads GEEDAEDGAE. Ser-494 bears the Phosphoserine mark.

It belongs to the CND2 H2 (condensin-2 subunit 2) family. In terms of assembly, component of the condensin-2 complex, which contains the SMC2 and SMC4 heterodimer, and three non SMC subunits, NCAPG2, NCAPH2 and NCAPD3 that probably regulate the complex.

It localises to the nucleus. Its function is as follows. Regulatory subunit of the condensin-2 complex, a complex that seems to provide chromosomes with an additional level of organization and rigidity and in establishing mitotic chromosome architecture. May promote the resolution of double-strand DNA catenanes (intertwines) between sister chromatids. Condensin-mediated compaction likely increases tension in catenated sister chromatids, providing directionality for type II topoisomerase-mediated strand exchanges toward chromatid decatenation. Required for decatenation of chromatin bridges at anaphase. Early in neurogenesis, may play an essential role to ensure accurate mitotic chromosome condensation in neuron stem cells, ultimately affecting neuron pool and cortex size. Seems to have lineage-specific role in T-cell development. The sequence is that of Condensin-2 complex subunit H2 from Mus musculus (Mouse).